The sequence spans 101 residues: Urease subunit beta (101 aa).

This sequence belongs to the urease beta subunit family. In terms of assembly, heterotrimer of UreA (gamma), UreB (beta) and UreC (alpha) subunits. Three heterotrimers associate to form the active enzyme.

Its subcellular location is the cytoplasm. It catalyses the reaction urea + 2 H2O + H(+) = hydrogencarbonate + 2 NH4(+). It participates in nitrogen metabolism; urea degradation; CO(2) and NH(3) from urea (urease route): step 1/1. The protein is Urease subunit beta of Actinobacillus pleuropneumoniae serotype 5b (strain L20).